Reading from the N-terminus, the 285-residue chain is NADPH-dependent 7-cyano-7-deazaguanine reductase (285 aa).

91–93 (IES) lines the substrate pocket. 93 to 94 (SK) provides a ligand contact to NADPH. Cys191 serves as the catalytic Thioimide intermediate. The Proton donor role is filled by Asp198. Residue 230-231 (HE) participates in substrate binding. NADPH is bound at residue 259-260 (RG).

This sequence belongs to the GTP cyclohydrolase I family. QueF type 2 subfamily. As to quaternary structure, homodimer.

Its subcellular location is the cytoplasm. The catalysed reaction is 7-aminomethyl-7-carbaguanine + 2 NADP(+) = 7-cyano-7-deazaguanine + 2 NADPH + 3 H(+). Its pathway is tRNA modification; tRNA-queuosine biosynthesis. In terms of biological role, catalyzes the NADPH-dependent reduction of 7-cyano-7-deazaguanine (preQ0) to 7-aminomethyl-7-deazaguanine (preQ1). This chain is NADPH-dependent 7-cyano-7-deazaguanine reductase, found in Legionella pneumophila (strain Paris).